Here is a 449-residue protein sequence, read N- to C-terminus: Streptomycin-6-phosphate phosphatase (449 aa).

The signal sequence occupies residues 1-32 (MRFAYGRLPWRRGAVLGSALLVLVTAPAASTA). A Mg(2+)-binding site is contributed by Asp-50. Asp-50 is a binding site for Zn(2+). Ser-99 serves as the catalytic Phosphoserine intermediate. Residues Asp-151 and Thr-153 each coordinate Mg(2+). The tract at residues 268 to 290 (APGGTAPQRCATRNPGRPAGTPD) is disordered. Residue Glu-321 coordinates Mg(2+). Zn(2+) is bound by residues Asp-326, His-330, Asp-368, His-369, and His-412.

It belongs to the alkaline phosphatase family. It depends on Mg(2+) as a cofactor. Zn(2+) serves as cofactor.

It localises to the secreted. It catalyses the reaction streptomycin 6-phosphate + H2O = streptomycin + phosphate. The protein operates within antibiotic biosynthesis; streptomycin biosynthesis. Its function is as follows. Specifically cleaves both streptomycin-6-phosphate and, more slowly, streptomycin-3''-phosphate during the biosynthesis of streptomycin. This chain is Streptomycin-6-phosphate phosphatase (strK), found in Streptomyces griseus.